A 371-amino-acid chain; its full sequence is Aminomethyltransferase (371 aa).

Belongs to the GcvT family. In terms of assembly, the glycine cleavage system is composed of four proteins: P, T, L and H.

It catalyses the reaction N(6)-[(R)-S(8)-aminomethyldihydrolipoyl]-L-lysyl-[protein] + (6S)-5,6,7,8-tetrahydrofolate = N(6)-[(R)-dihydrolipoyl]-L-lysyl-[protein] + (6R)-5,10-methylene-5,6,7,8-tetrahydrofolate + NH4(+). Functionally, the glycine cleavage system catalyzes the degradation of glycine. This Nitrosococcus oceani (strain ATCC 19707 / BCRC 17464 / JCM 30415 / NCIMB 11848 / C-107) protein is Aminomethyltransferase.